Here is a 415-residue protein sequence, read N- to C-terminus: Trehalose synthase (415 aa).

The protein belongs to the glycosyltransferase group 1 family. Glycosyltransferase 4 subfamily. In terms of assembly, homodimer. It depends on Mg(2+) as a cofactor.

It catalyses the reaction an NDP-alpha-D-glucose + D-glucose = alpha,alpha-trehalose + a ribonucleoside 5'-diphosphate + H(+). In terms of biological role, synthesizes trehalose from ADP-, UDP- or GDP-glucose and glucose. The sequence is that of Trehalose synthase from Pyrococcus horikoshii (strain ATCC 700860 / DSM 12428 / JCM 9974 / NBRC 100139 / OT-3).